The chain runs to 88 residues: Elongation factor 1-beta (88 aa).

It belongs to the EF-1-beta/EF-1-delta family.

Its function is as follows. Promotes the exchange of GDP for GTP in EF-1-alpha/GDP, thus allowing the regeneration of EF-1-alpha/GTP that could then be used to form the ternary complex EF-1-alpha/GTP/AAtRNA. This chain is Elongation factor 1-beta, found in Natronomonas pharaonis (strain ATCC 35678 / DSM 2160 / CIP 103997 / JCM 8858 / NBRC 14720 / NCIMB 2260 / Gabara) (Halobacterium pharaonis).